The following is a 202-amino-acid chain: Orotate phosphoribosyltransferase (202 aa).

A 5-phospho-alpha-D-ribose 1-diphosphate-binding site is contributed by 113-121 (EDIITTGGS). Orotate is bound by residues Thr-117 and Arg-145.

Belongs to the purine/pyrimidine phosphoribosyltransferase family. PyrE subfamily. In terms of assembly, homodimer. It depends on Mg(2+) as a cofactor.

It carries out the reaction orotidine 5'-phosphate + diphosphate = orotate + 5-phospho-alpha-D-ribose 1-diphosphate. It functions in the pathway pyrimidine metabolism; UMP biosynthesis via de novo pathway; UMP from orotate: step 1/2. Its function is as follows. Catalyzes the transfer of a ribosyl phosphate group from 5-phosphoribose 1-diphosphate to orotate, leading to the formation of orotidine monophosphate (OMP). In Nitratiruptor sp. (strain SB155-2), this protein is Orotate phosphoribosyltransferase.